Consider the following 221-residue polypeptide: 7-cyano-7-deazaguanine synthase (221 aa).

10 to 20 (FSGGQDSTTCL) provides a ligand contact to ATP. Zn(2+) contacts are provided by Cys-186, Cys-195, Cys-198, and Cys-201.

The protein belongs to the QueC family. Homodimer. Zn(2+) is required as a cofactor.

The enzyme catalyses 7-carboxy-7-deazaguanine + NH4(+) + ATP = 7-cyano-7-deazaguanine + ADP + phosphate + H2O + H(+). Its pathway is purine metabolism; 7-cyano-7-deazaguanine biosynthesis. Functionally, catalyzes the ATP-dependent conversion of 7-carboxy-7-deazaguanine (CDG) to 7-cyano-7-deazaguanine (preQ(0)). The protein is 7-cyano-7-deazaguanine synthase of Geobacillus sp. (strain WCH70).